The following is a 311-amino-acid chain: Immune-associated nucleotide-binding protein 7 (311 aa).

One can recognise an AIG1-type G domain in the interval 14-222 (KQAENIVLVG…YTDDTYHMIK (209 aa)). The segment at 23-30 (GRTGNGKS) is G1. GTP is bound by residues 23-31 (GRTGNGKSA) and serine 44. The interval 50–54 (GVTMK) is G2. A G3 region spans residues 72–75 (DTPG). The interval 142–145 (TGGD) is G4. A G5 region spans residues 181-183 (DNK). Asparagine 182 contacts GTP. Residues 218–295 (YHMIKEESEK…TQENNELNLA (78 aa)) adopt a coiled-coil conformation.

The protein belongs to the TRAFAC class TrmE-Era-EngA-EngB-Septin-like GTPase superfamily. AIG1/Toc34/Toc159-like paraseptin GTPase family. IAN subfamily. As to expression, ubiquitous.

This chain is Immune-associated nucleotide-binding protein 7, found in Arabidopsis thaliana (Mouse-ear cress).